A 265-amino-acid polypeptide reads, in one-letter code: tRNA pseudouridine synthase A (265 aa).

The active-site Nucleophile is the aspartate 58. Tyrosine 116 contributes to the substrate binding site.

It belongs to the tRNA pseudouridine synthase TruA family. In terms of assembly, homodimer.

It carries out the reaction uridine(38/39/40) in tRNA = pseudouridine(38/39/40) in tRNA. Its function is as follows. Formation of pseudouridine at positions 38, 39 and 40 in the anticodon stem and loop of transfer RNAs. The sequence is that of tRNA pseudouridine synthase A from Neisseria meningitidis serogroup C (strain 053442).